Consider the following 158-residue polypeptide: Putative cTAGE family member 3 (158 aa).

The stretch at 26 to 96 (QLQESQKQLL…AAVLEEDITD (71 aa)) forms a coiled coil.

The protein belongs to the cTAGE family. In terms of tissue distribution, expressed in normal tissues including colon, mammary gland, ovary, placenta, stomach and testis, as well as several fetal tissues.

Functionally, tumor-associated antigen. This Homo sapiens (Human) protein is Putative cTAGE family member 3 (CTAGE3P).